We begin with the raw amino-acid sequence, 74 residues long: Small ribosomal subunit protein uS15 (74 aa).

The protein belongs to the universal ribosomal protein uS15 family. In terms of assembly, part of the 30S ribosomal subunit. Forms a bridge to the 50S subunit in the 70S ribosome, contacting the 23S rRNA.

One of the primary rRNA binding proteins, it binds directly to 16S rRNA where it helps nucleate assembly of the platform of the 30S subunit by binding and bridging several RNA helices of the 16S rRNA. Functionally, forms an intersubunit bridge (bridge B4) with the 23S rRNA of the 50S subunit in the ribosome. The chain is Small ribosomal subunit protein uS15 from Aster yellows witches'-broom phytoplasma (strain AYWB).